Here is a 274-residue protein sequence, read N- to C-terminus: 4-hydroxy-tetrahydrodipicolinate reductase (274 aa).

Residues 8–13 (GALGRM), glutamate 34, 102–104 (GTT), and 128–131 (SQNF) contribute to the NAD(+) site. The active-site Proton donor/acceptor is histidine 160. Histidine 161 is a (S)-2,3,4,5-tetrahydrodipicolinate binding site. Lysine 164 serves as the catalytic Proton donor. 170–171 (GT) lines the (S)-2,3,4,5-tetrahydrodipicolinate pocket.

It belongs to the DapB family.

The protein localises to the cytoplasm. The catalysed reaction is (S)-2,3,4,5-tetrahydrodipicolinate + NAD(+) + H2O = (2S,4S)-4-hydroxy-2,3,4,5-tetrahydrodipicolinate + NADH + H(+). It carries out the reaction (S)-2,3,4,5-tetrahydrodipicolinate + NADP(+) + H2O = (2S,4S)-4-hydroxy-2,3,4,5-tetrahydrodipicolinate + NADPH + H(+). It participates in amino-acid biosynthesis; L-lysine biosynthesis via DAP pathway; (S)-tetrahydrodipicolinate from L-aspartate: step 4/4. Its function is as follows. Catalyzes the conversion of 4-hydroxy-tetrahydrodipicolinate (HTPA) to tetrahydrodipicolinate. The protein is 4-hydroxy-tetrahydrodipicolinate reductase of Methanocaldococcus jannaschii (strain ATCC 43067 / DSM 2661 / JAL-1 / JCM 10045 / NBRC 100440) (Methanococcus jannaschii).